Here is a 1055-residue protein sequence, read N- to C-terminus: Pre-mRNA-splicing factor ATP-dependent RNA helicase-like protein cdc28 (1055 aa).

Residues 67-78 (PREGSRPKENYN) show a composition bias toward basic and acidic residues. A disordered region spans residues 67–184 (PREGSRPKEN…TERLNDLRER (118 aa)). Residues 112–121 (PLKKKSRSKT) show a composition bias toward basic residues. The segment covering 122 to 132 (PKREIARRQRD) has biased composition (basic and acidic residues). The segment covering 133-145 (EDEWESDEYEEVV) has biased composition (acidic residues). The span at 163–184 (QNHDYEKSSDPETERLNDLRER) shows a compositional bias: basic and acidic residues. The region spanning 428–592 (LKAINEYQVL…FDEAPVFYVP (165 aa)) is the Helicase ATP-binding domain. 441-448 (AETGSGKT) is a binding site for ATP. The short motif at 539–542 (DEAH) is the DEAH box element. In terms of domain architecture, Helicase C-terminal spans 617–790 (TILQIHTTQP…NIVLLLKSLG (174 aa)).

It belongs to the DEAD box helicase family. DEAH subfamily. DDX16/PRP8 sub-subfamily.

It is found in the nucleus. It catalyses the reaction ATP + H2O = ADP + phosphate + H(+). In terms of biological role, involved in pre-mRNA splicing. Is required together with ATP and at least one other factor, for the first cleavage-ligation reaction. Functions as a molecular motor in the activation of the precatalytic spliceosome for the first transesterification reaction of pre-mRNA splicing by hydrolyzing ATP to cause the activation of the spliceosome without the occurrence of splicing. The sequence is that of Pre-mRNA-splicing factor ATP-dependent RNA helicase-like protein cdc28 (cdc28) from Schizosaccharomyces pombe (strain 972 / ATCC 24843) (Fission yeast).